A 120-amino-acid polypeptide reads, in one-letter code: NAD(P)H-quinone oxidoreductase subunit 3, chloroplastic (120 aa).

A run of 3 helical transmembrane segments spans residues 9–29 (IFWAFLIISSLIPILAFLISG), 64–84 (MFALIFVVFDVETVFLYPWAM), and 88–108 (VLGVSVFLEAFLFVLILIVGS).

Belongs to the complex I subunit 3 family. As to quaternary structure, NDH is composed of at least 16 different subunits, 5 of which are encoded in the nucleus.

The protein localises to the plastid. It localises to the chloroplast thylakoid membrane. It catalyses the reaction a plastoquinone + NADH + (n+1) H(+)(in) = a plastoquinol + NAD(+) + n H(+)(out). The catalysed reaction is a plastoquinone + NADPH + (n+1) H(+)(in) = a plastoquinol + NADP(+) + n H(+)(out). In terms of biological role, NDH shuttles electrons from NAD(P)H:plastoquinone, via FMN and iron-sulfur (Fe-S) centers, to quinones in the photosynthetic chain and possibly in a chloroplast respiratory chain. The immediate electron acceptor for the enzyme in this species is believed to be plastoquinone. Couples the redox reaction to proton translocation, and thus conserves the redox energy in a proton gradient. The protein is NAD(P)H-quinone oxidoreductase subunit 3, chloroplastic of Phaseolus vulgaris (Kidney bean).